Consider the following 134-residue polypeptide: Small ribosomal subunit protein uS8c (134 aa).

It belongs to the universal ribosomal protein uS8 family. Part of the 30S ribosomal subunit.

Its subcellular location is the plastid. It is found in the chloroplast. Functionally, one of the primary rRNA binding proteins, it binds directly to 16S rRNA central domain where it helps coordinate assembly of the platform of the 30S subunit. The polypeptide is Small ribosomal subunit protein uS8c (rps8) (Populus alba (White poplar)).